A 251-amino-acid polypeptide reads, in one-letter code: NADPH-dependent oxidoreductase (251 aa).

The protein belongs to the flavin oxidoreductase frp family. FMN serves as cofactor.

In terms of biological role, reduces FMN, organic nitro compounds and disulfide DTNB. Involved in maintenance of the cellular redox state and the disulfide stress response. The polypeptide is NADPH-dependent oxidoreductase (nfrA) (Staphylococcus epidermidis (strain ATCC 12228 / FDA PCI 1200)).